Here is a 374-residue protein sequence, read N- to C-terminus: Putative 2,3-diketo-5-methylthiopentyl-1-phosphate enolase (374 aa).

Substrate is bound by residues lysine 138, 164–167, histidine 255, glycine 327, and 349–350; these read QDDE and GG. Aspartate 166 contacts Mg(2+).

Belongs to the RuBisCO large chain family. Type IV subfamily. Homodimer. The cofactor is Mg(2+).

The catalysed reaction is 5-methylsulfanyl-2,3-dioxopentyl phosphate = 2-hydroxy-5-methylsulfanyl-3-oxopent-1-enyl phosphate. The protein operates within amino-acid biosynthesis; L-methionine biosynthesis via salvage pathway; L-methionine from S-methyl-5-thio-alpha-D-ribose 1-phosphate: step 3/6. Catalyzes the enolization of 2,3-diketo-5-methylthiopentyl-1-phosphate (DK-MTP-1-P) into 2-hydroxy-3-keto-5-methylthiopentenyl-1-phosphate (HK-MTPenyl-1-P). This is Putative 2,3-diketo-5-methylthiopentyl-1-phosphate enolase (mtnW) from Shouchella clausii (strain KSM-K16) (Alkalihalobacillus clausii).